A 326-amino-acid polypeptide reads, in one-letter code: MSKIIAVTMGDPAGIGPEIIIKSLAEGELSGASAVVVGCVQTMRRILALNVVPTVELKIIDKPADAVFAPGVINIIDEPLEDPQALKPGIVQAQAGDLAYRCIKKATALAMAGEVHAIATAPLNKEALHSAGHLYPGHTELLAKLTNSRDYAMVLYTDKLKVIHVSTHIALRKFLDTLNRDRVETVIEMADVFLKRVGFTHPRIAVAGVNPHAGENGLFGDEEIKIVSPSVEAMKAKGIDVYGPCPPDTVYLQAYEGQYDMVVAMYHDQGHIPLKLLGFYDGVNITAGLPFIRTSADHGTAFDIAWTGKAKPESMAISIQLAMQLA.

Substrate is bound by residues His138 and Thr139. Residues His168, His212, and His267 each coordinate a divalent metal cation. Residues Lys275, Asn284, and Arg293 each contribute to the substrate site.

Belongs to the PdxA family. PdxA2 subfamily. In terms of assembly, homodimer. It depends on a divalent metal cation as a cofactor.

The enzyme catalyses 4-O-phospho-D-threonate + NAD(+) = dihydroxyacetone phosphate + CO2 + NADH. Functionally, catalyzes the NAD-dependent oxidation and subsequent decarboxylation of D-threonate 4-phosphate to produce dihydroxyacetone phosphate (DHAP). Can also use 4-hydroxy-L-threonine 4-phosphate as substrate. The sequence is that of D-threonate 4-phosphate dehydrogenase from Pectobacterium atrosepticum (strain SCRI 1043 / ATCC BAA-672) (Erwinia carotovora subsp. atroseptica).